A 428-amino-acid polypeptide reads, in one-letter code: Nuclear hormone receptor family member nhr-44 (428 aa).

Residues S21–R98 constitute a DNA-binding region (nuclear receptor). 2 NR C4-type zinc fingers span residues C24–C44 and C61–C86. Positions S181–S427 constitute an NR LBD domain.

The protein belongs to the nuclear hormone receptor family.

It is found in the nucleus. Its function is as follows. Orphan nuclear receptor. The polypeptide is Nuclear hormone receptor family member nhr-44 (nhr-44) (Caenorhabditis elegans).